Consider the following 88-residue polypeptide: Large ribosomal subunit protein bL27 (88 aa).

A disordered region spans residues 1–25; sequence MAHKKGASSSRNGRDSNAQRLGVKR. A compositionally biased stretch (polar residues) spans 7-19; it reads ASSSRNGRDSNAQ.

This sequence belongs to the bacterial ribosomal protein bL27 family.

This Nocardia farcinica (strain IFM 10152) protein is Large ribosomal subunit protein bL27.